The chain runs to 1975 residues: Cadherin-87A (1975 aa).

The N-terminal stretch at M1 to A17 is a signal peptide. At K18 to A1775 the chain is on the extracellular side. Cadherin domains follow at residues T28 to F132, Q133 to F245, Q246 to F358, N359 to F472, E473 to C669, E670 to F774, E775 to F878, V879 to F998, N999 to F1103, S1104 to F1211, T1212 to F1318, V1319 to F1431, P1432 to F1553, and E1554 to E1677. N-linked (GlcNAc...) asparagine glycans are attached at residues N39, N77, and N203. N-linked (GlcNAc...) asparagine glycosylation occurs at N424. Positions C535–G560 are disordered. Residues D537–L549 show a composition bias toward basic and acidic residues. Over residues N550–G560 the composition is skewed to acidic residues. 2 N-linked (GlcNAc...) asparagine glycosylation sites follow: N730 and N761. N1039, N1049, N1111, N1163, N1217, N1325, N1349, N1492, N1576, and N1691 each carry an N-linked (GlcNAc...) asparagine glycan. A helical transmembrane segment spans residues V1776–L1796. Over C1797–I1975 the chain is Cytoplasmic. Over residues Y1887–L1899 the composition is skewed to polar residues. Residues Y1887–A1916 form a disordered region. The span at T1900–A1916 shows a compositional bias: gly residues.

It is found in the cell membrane. In terms of biological role, cadherins are calcium-dependent cell adhesion proteins. They preferentially interact with themselves in a homophilic manner in connecting cells. This is Cadherin-87A (Cad87A) from Drosophila melanogaster (Fruit fly).